Consider the following 665-residue polypeptide: Chaperone protein dnaK1 (665 aa).

Phosphothreonine; by autocatalysis is present on T198. The disordered stretch occupies residues 634–665; that stretch reads DDPWDNQMNSNSRNSRYGNSRDDDPWDNDYFL. Residues 642 to 651 are compositionally biased toward low complexity; the sequence is NSNSRNSRYG.

The protein belongs to the heat shock protein 70 family.

Functionally, acts as a chaperone. This Prochlorococcus marinus subsp. pastoris (strain CCMP1986 / NIES-2087 / MED4) protein is Chaperone protein dnaK1 (dnaK1).